The chain runs to 219 residues: Ras-related protein Rab-3B (219 aa).

The residue at position 2 (alanine 2) is an N-acetylalanine. Residues serine 31, serine 32, valine 33, glycine 34, lysine 35, threonine 36, serine 37, proline 49, and serine 53 each contribute to the GTP site. Serine 32 lines the GDP pocket. 4 residues coordinate GDP: glycine 34, lysine 35, threonine 36, and serine 37. A Mg(2+)-binding site is contributed by threonine 36. Residues 45–58 (DTFTPAFVSTVGID) carry the Switch 1 motif. The Mg(2+) site is built by threonine 54 and aspartate 77. Positions 78 to 96 (TAGQERYRTITTAYYRGAM) match the Switch 2 motif. Glycine 80 serves as a coordination point for GTP. Phosphothreonine; by LRRK2 is present on threonine 86. 3 residues coordinate GTP: asparagine 135, lysine 136, and aspartate 138. Residues asparagine 135, lysine 136, aspartate 138, methionine 139, alanine 166, and lysine 167 each coordinate GDP. GTP-binding residues include alanine 166 and lysine 167. Serine 188 and serine 190 each carry phosphoserine. S-geranylgeranyl cysteine attachment occurs at residues cysteine 217 and cysteine 219. Position 219 is a cysteine methyl ester (cysteine 219).

It belongs to the small GTPase superfamily. Rab family. In terms of assembly, interacts with RIMS1, RIMS2, RPH3A and RPH3AL. The GTP-bound form interacts with GAS8/DRC4 (via coiled-coil domains). The GTP-bound form interacts with REP15. Interacts with GDI2, CHM and CHML; phosphorylation at Thr-86 disrupts these interactions. Interacts with MADD (via uDENN domain); the GTP-bound form is preferred for interaction. The cofactor is Mg(2+). Post-translationally, phosphorylation of Thr-86 in the switch II region by LRRK2 prevents the association of RAB regulatory proteins, including CHM, CHML and RAB GDP dissociation inhibitor GDI2.

The protein resides in the cell membrane. It localises to the golgi apparatus. The catalysed reaction is GTP + H2O = GDP + phosphate + H(+). Its activity is regulated as follows. Regulated by guanine nucleotide exchange factors (GEFs) which promote the exchange of bound GDP for free GTP. Regulated by GTPase activating proteins (GAPs) which increase the GTP hydrolysis activity. Inhibited by GDP dissociation inhibitors (GDIs) which prevent Rab-GDP dissociation. Its function is as follows. The small GTPases Rab are key regulators of intracellular membrane trafficking, from the formation of transport vesicles to their fusion with membranes. Rabs cycle between an inactive GDP-bound form and an active GTP-bound form that is able to recruit to membranes different sets of downstream effectors directly responsible for vesicle formation, movement, tethering and fusion. This is Ras-related protein Rab-3B from Homo sapiens (Human).